Reading from the N-terminus, the 144-residue chain is Transcriptional regulator MraZ (144 aa).

2 SpoVT-AbrB domains span residues 5–47 (TYTP…PRAE) and 77–120 (TDEQ…DAQA).

The protein belongs to the MraZ family. In terms of assembly, forms oligomers.

It is found in the cytoplasm. The protein localises to the nucleoid. The chain is Transcriptional regulator MraZ from Mycolicibacterium vanbaalenii (strain DSM 7251 / JCM 13017 / BCRC 16820 / KCTC 9966 / NRRL B-24157 / PYR-1) (Mycobacterium vanbaalenii).